Reading from the N-terminus, the 72-residue chain is Large ribosomal subunit protein bL32 (72 aa).

Belongs to the bacterial ribosomal protein bL32 family.

The chain is Large ribosomal subunit protein bL32 from Dehalococcoides mccartyi (strain ATCC BAA-2100 / JCM 16839 / KCTC 5957 / BAV1).